The sequence spans 318 residues: Large ribosomal subunit protein uL10 (318 aa).

Phosphotyrosine is present on Y24. A Phosphothreonine modification is found at T59. K264 participates in a covalent cross-link: Glycyl lysine isopeptide (Lys-Gly) (interchain with G-Cter in ubiquitin). Positions 293–318 (TAAPAKVEAKEESEESDEDMGFGLFD) are disordered. K298 participates in a covalent cross-link: Glycyl lysine isopeptide (Lys-Gly) (interchain with G-Cter in SUMO1); alternate. K298 participates in a covalent cross-link: Glycyl lysine isopeptide (Lys-Gly) (interchain with G-Cter in SUMO2); alternate. The span at 303 to 312 (EESEESDEDM) shows a compositional bias: acidic residues. A phosphoserine mark is found at S305 and S308.

It belongs to the universal ribosomal protein uL10 family. In terms of assembly, P0 forms a pentameric complex by interaction with dimers of P1 and P2. Identified in a IGF2BP1-dependent mRNP granule complex containing untranslated mRNAs. Interacts with APEX1. Interacts with FMR1. In terms of processing, ubiquitinated at Lys-264 by RNF14 and RNF25 in response to ribosome collisions (ribosome stalling).

Its subcellular location is the nucleus. The protein resides in the cytoplasm. Its function is as follows. Ribosomal protein P0 is the functional equivalent of E.coli protein L10. This chain is Large ribosomal subunit protein uL10 (RPLP0), found in Bos taurus (Bovine).